The sequence spans 731 residues: MSSVLRNQDNPPTISEVSSTTKENTDNSNSKQEEKEKEKEISSTIENPTFVDDEEDNNPFSHHGEGLTSFMTANSFNEGPNTKSDKRTTKENNNSSSNNNRGDNNDDDDDDSLLLYNTSNNNKSNNVSRVNPMLKSTGEVFKTVNMNFESRVTKLLKPNTKIRIQITEAGNSNEGMSNSSKKYTVYTIKLINLEDPNNDILTRRRYSDFESLRDVLTKIFPLIVIPPIPPKNYFDFSMLNGLVGSNHENSSLSVAGSNGNSGGSGGGGASGGAGSGSGNGSIITSPKTYSYINSTHLTKGKLIEHRKRLLTNFLNNCLEIKQIRSLEFFAKFLDPNANWGDEIALIQSQLPKSIYLSNPENGLKTDPIYSNLPNPSNKNTISFFKDNKKKLTKKTNKLLSNGSENHDIGVGGGGGSIGNGGNGVNGNGTNSQSQYIANTSMLDDINKRIMENYIGLSNDYSKLGSTFNSFSLILAETTTTTTTGVSSATKKSNDNELNLIFDKIGQVFDRSYITINSLIGELETKFSEPLGEIVQYTSIIHYVAKYQSKKIKQKSMLDNEIKDKRKTLEDLLKIERESNRIENAINSQVKPKNGKYNLEQQQSSTVSPAPPPGPPPSSSSSSSSSSKFKFPSFKKITQYVSEIIDQNPEVTRKQKITNLQEKIQILEKCQNIMLADLSFITDEVNKNIQSFQKRQLKMIYKILLLYNKQLIGWAKKNIDIWEEVRDEIAKM.

Residues 1 to 22 are compositionally biased toward polar residues; it reads MSSVLRNQDNPPTISEVSSTTK. Residues 1–130 form a disordered region; sequence MSSVLRNQDN…NNKSNNVSRV (130 aa). Residues 31-41 show a composition bias toward basic and acidic residues; that stretch reads KQEEKEKEKEI. A compositionally biased stretch (polar residues) spans 69–82; the sequence is SFMTANSFNEGPNT. 2 stretches are compositionally biased toward low complexity: residues 92 to 102 and 113 to 128; these read NNNSSSNNNRG and LLLY…NNVS. A PX domain is found at 164-340; sequence IQITEAGNSN…KFLDPNANWG (177 aa). The a 1,2-diacyl-sn-glycero-3-phospho-(1D-myo-inositol-3-phosphate) site is built by arginine 205, serine 207, and lysine 231. Residues 253-277 form a disordered region; it reads SVAGSNGNSGGSGGGGASGGAGSGS. The span at 259–277 shows a compositional bias: gly residues; that stretch reads GNSGGSGGGGASGGAGSGS. Arginine 306 lines the a 1,2-diacyl-sn-glycero-3-phospho-(1D-myo-inositol-3-phosphate) pocket. The interval 586–626 is disordered; it reads NSQVKPKNGKYNLEQQQSSTVSPAPPPGPPPSSSSSSSSSS. Positions 608-617 are enriched in pro residues; sequence PAPPPGPPPS.

The protein belongs to the sorting nexin family.

It localises to the endosome membrane. It is found in the preautophagosomal structure membrane. Its function is as follows. Required for cytoplasm to vacuole transport (Cvt), pexophagy and mitophagy. Also involved in endoplasmic reticulum-specific autophagic process and is essential for the survival of cells subjected to severe ER stress. Functions in protein retrieval from the endocytic pathway. This chain is Autophagy-related protein 20 (ATG20), found in Candida albicans (strain SC5314 / ATCC MYA-2876) (Yeast).